The chain runs to 104 residues: Large ribosomal subunit protein uL24 (104 aa).

Belongs to the universal ribosomal protein uL24 family. In terms of assembly, part of the 50S ribosomal subunit.

Functionally, one of two assembly initiator proteins, it binds directly to the 5'-end of the 23S rRNA, where it nucleates assembly of the 50S subunit. In terms of biological role, one of the proteins that surrounds the polypeptide exit tunnel on the outside of the subunit. In Psychromonas ingrahamii (strain DSM 17664 / CCUG 51855 / 37), this protein is Large ribosomal subunit protein uL24.